We begin with the raw amino-acid sequence, 792 residues long: Homeobox protein HAZ1 (792 aa).

The tract at residues 1–154 is disordered; the sequence is MDKTTTSDLV…RPPKGGTPKD (154 aa). A compositionally biased stretch (polar residues) spans 15–36; sequence NIGSNAGSAQEPLTTNGKTSGV. The span at 38-49 shows a compositional bias: basic residues; sequence NRYKQTVKRGRK. The segment covering 51–67 has biased composition (polar residues); the sequence is SQISPSKTYPLRSSHSN. The segment covering 95–104 has biased composition (basic residues); the sequence is VAKKRKRSKP. A compositionally biased stretch (basic and acidic residues) spans 116-127; the sequence is TSEKKNKAHNEL. A PHD-type zinc finger spans residues 244 to 301; the sequence is DIFCAACGSKDVTLKNDIILCDGICDRGFHQYCLNPPLLAEDIPQGDEGWLCPACDCK. Disordered stretches follow at residues 338-495 and 529-599; these read QIDA…NSNL and YGKA…SDQQ. The segment covering 345–354 has biased composition (acidic residues); it reads PSDDSADNDY. A compositionally biased stretch (basic and acidic residues) spans 362-371; that stretch reads HKVDEEKSSG. 2 stretches are compositionally biased toward acidic residues: residues 373–389 and 433–453; these read DGGEGLDSDDSSSEDSE and DESNSDQSDESDFTSDSDDFC. The homeobox DNA-binding region spans 610 to 669; the sequence is STAKNRHFGPAINQKLKAHFKEDPYPSRATKENLAQELGLTFNQVTKWFSSTRHYARVAA. Disordered stretches follow at residues 677-697 and 711-792; these read ENHTAENNNNTNTVDSIQLRG and SEER…KTGR. Composition is skewed to polar residues over residues 716-737 and 746-760; these read GQSNLNEGTPLRSDTSCGQSVA and NQGNDSSSNVRTPNA. A compositionally biased stretch (basic and acidic residues) spans 774–792; sequence DEARRKAVQRELRKMKTGR.

This sequence belongs to the PHD-associated homeobox family. As to expression, expressed in roots, leaves, stems, panicle and seeds.

It is found in the nucleus. In terms of biological role, transcriptional repressor involved in the regulation of gibberrelin (GA) signaling. Binds to the 5'-GATC-3' motif of HD16/EL1 promoter. Functions as a positive regulator of GA signaling by suppressing the expression of HD16/EL1, a negative regulator of GA signaling. The polypeptide is Homeobox protein HAZ1 (Oryza sativa subsp. japonica (Rice)).